A 322-amino-acid polypeptide reads, in one-letter code: Mycothiol acetyltransferase (322 aa).

2 consecutive N-acetyltransferase domains span residues 5–150 and 160–322; these read SWLR…DPDD and VTIR…PARG. Glutamate 36 provides a ligand contact to 1D-myo-inositol 2-(L-cysteinylamino)-2-deoxy-alpha-D-glucopyranoside. Acetyl-CoA contacts are provided by residues 79–81 and 87–92; these read LVV and RRGVGT. 3 residues coordinate 1D-myo-inositol 2-(L-cysteinylamino)-2-deoxy-alpha-D-glucopyranoside: glutamate 187, lysine 226, and glutamate 252. 256 to 258 serves as a coordination point for acetyl-CoA; sequence VGV. Tyrosine 290 lines the 1D-myo-inositol 2-(L-cysteinylamino)-2-deoxy-alpha-D-glucopyranoside pocket. 295 to 300 serves as a coordination point for acetyl-CoA; that stretch reads NARAVR.

Belongs to the acetyltransferase family. MshD subfamily. As to quaternary structure, monomer.

The catalysed reaction is 1D-myo-inositol 2-(L-cysteinylamino)-2-deoxy-alpha-D-glucopyranoside + acetyl-CoA = mycothiol + CoA + H(+). Functionally, catalyzes the transfer of acetyl from acetyl-CoA to desacetylmycothiol (Cys-GlcN-Ins) to form mycothiol. The chain is Mycothiol acetyltransferase from Parafrankia sp. (strain EAN1pec).